A 101-amino-acid chain; its full sequence is Small ribosomal subunit protein uS14 (101 aa).

This sequence belongs to the universal ribosomal protein uS14 family. In terms of assembly, part of the 30S ribosomal subunit. Contacts proteins S3 and S10.

Its function is as follows. Binds 16S rRNA, required for the assembly of 30S particles and may also be responsible for determining the conformation of the 16S rRNA at the A site. This is Small ribosomal subunit protein uS14 from Serratia proteamaculans (strain 568).